The sequence spans 235 residues: Succinate dehydrogenase iron-sulfur subunit (235 aa).

Residues Cys53, Cys58, and Cys73 each contribute to the [2Fe-2S] cluster site. The region spanning 133 to 163 is the 4Fe-4S ferredoxin-type domain; that stretch reads ERAKLDGLYECILCACCSSSCPSYWWNPDKF. Residues Cys143, Cys146, and Cys149 each contribute to the [4Fe-4S] cluster site. Residue Cys153 coordinates [3Fe-4S] cluster. Residue Trp158 participates in a ubiquinone binding. Positions 200 and 206 each coordinate [3Fe-4S] cluster. Cys210 is a [4Fe-4S] cluster binding site.

This sequence belongs to the succinate dehydrogenase/fumarate reductase iron-sulfur protein family. Part of an enzyme complex containing four subunits: a flavoprotein, an iron-sulfur protein, cytochrome b-556 and a hydrophobic protein. [2Fe-2S] cluster is required as a cofactor. It depends on [3Fe-4S] cluster as a cofactor. [4Fe-4S] cluster serves as cofactor.

The catalysed reaction is a quinone + succinate = fumarate + a quinol. It participates in carbohydrate metabolism; tricarboxylic acid cycle; fumarate from succinate (bacterial route): step 1/1. This chain is Succinate dehydrogenase iron-sulfur subunit (sdhB), found in Coxiella burnetii (strain RSA 493 / Nine Mile phase I).